We begin with the raw amino-acid sequence, 421 residues long: Putative NBPF family member NBPF7 (421 aa).

Residues 87-143 adopt a coiled-coil conformation; it reads IKSMLREELQFKEEKLAEQLKQAEELRQYKVLVHSQERELIQLREKLREGRDASHSL. Disordered stretches follow at residues 179-251, 312-334, and 402-421; these read VHKL…KITS, EKEVLQDSPEERVTTSCSDHDVS, and YNSKPSSIPNTTLQGSFTED. Olduvai domains lie at 190–279 and 280–391; these read EDEN…NILL and ENQN…RMSQ. The span at 194 to 217 shows a compositional bias: basic and acidic residues; it reads DKTKELDKVQESPAPREEQKAEEK. Residues 230 to 243 are compositionally biased toward polar residues; the sequence is TYSNSHGPSDSNPP. The segment covering 312 to 333 has biased composition (basic and acidic residues); that stretch reads EKEVLQDSPEERVTTSCSDHDV. The segment covering 403–421 has biased composition (polar residues); it reads NSKPSSIPNTTLQGSFTED.

This sequence belongs to the NBPF family.

It localises to the cytoplasm. In Homo sapiens (Human), this protein is Putative NBPF family member NBPF7.